The following is a 457-amino-acid chain: Siroheme synthase (457 aa).

Residues 1 to 204 (MDHLPIFCQL…ADEKAVNATT (204 aa)) form a precorrin-2 dehydrogenase /sirohydrochlorin ferrochelatase region. NAD(+)-binding positions include 22 to 23 (DV) and 43 to 44 (LT). Ser-128 is modified (phosphoserine). The uroporphyrinogen-III C-methyltransferase stretch occupies residues 216-457 (GEVVLVGAGP…RDKLNWFSNH (242 aa)). Pro-225 is a binding site for S-adenosyl-L-methionine. Residue Asp-248 is the Proton acceptor of the active site. The active-site Proton donor is the Lys-270. Residues 301–303 (GGD), Ile-306, 331–332 (TA), Met-382, and Gly-411 each bind S-adenosyl-L-methionine.

This sequence in the N-terminal section; belongs to the precorrin-2 dehydrogenase / sirohydrochlorin ferrochelatase family. It in the C-terminal section; belongs to the precorrin methyltransferase family.

It carries out the reaction uroporphyrinogen III + 2 S-adenosyl-L-methionine = precorrin-2 + 2 S-adenosyl-L-homocysteine + H(+). The enzyme catalyses precorrin-2 + NAD(+) = sirohydrochlorin + NADH + 2 H(+). It catalyses the reaction siroheme + 2 H(+) = sirohydrochlorin + Fe(2+). It participates in cofactor biosynthesis; adenosylcobalamin biosynthesis; precorrin-2 from uroporphyrinogen III: step 1/1. It functions in the pathway cofactor biosynthesis; adenosylcobalamin biosynthesis; sirohydrochlorin from precorrin-2: step 1/1. The protein operates within porphyrin-containing compound metabolism; siroheme biosynthesis; precorrin-2 from uroporphyrinogen III: step 1/1. Its pathway is porphyrin-containing compound metabolism; siroheme biosynthesis; siroheme from sirohydrochlorin: step 1/1. It participates in porphyrin-containing compound metabolism; siroheme biosynthesis; sirohydrochlorin from precorrin-2: step 1/1. Functionally, multifunctional enzyme that catalyzes the SAM-dependent methylations of uroporphyrinogen III at position C-2 and C-7 to form precorrin-2 via precorrin-1. Then it catalyzes the NAD-dependent ring dehydrogenation of precorrin-2 to yield sirohydrochlorin. Finally, it catalyzes the ferrochelation of sirohydrochlorin to yield siroheme. In Salmonella schwarzengrund (strain CVM19633), this protein is Siroheme synthase.